A 323-amino-acid chain; its full sequence is MTRRAVVIGAGHYLPDRIVENAEFEATLDTSDEWIRSRSGIERRHFAAEGETTSHMATRAAEAALKSAGRSADDVDAIVLATSTADLTFPSAATMVQSQLGMTKGFAFDVQAVCAGFVYALSNANALIASGQADRVLVIGAETFSRIMDWTDRSTCVLFGDGAGALLLEAQEGEGTSKDRGILATDLNSDGRYKDLLYVDGGVSTQSTGYLRMQGNQVFRHAVEKLASTAHTALERAGASTDEVDWIVPHQANIRIIQGTAKKMGLPMDKVVVTVQDHGNTSAASIPLALSVGVERGQIKPGDLIVTEAIGGGLAWGAVVLRW.

Catalysis depends on residues C114 and H250. The tract at residues Q251–R255 is ACP-binding. N280 is an active-site residue.

It belongs to the thiolase-like superfamily. FabH family. Homodimer.

It localises to the cytoplasm. It catalyses the reaction malonyl-[ACP] + acetyl-CoA + H(+) = 3-oxobutanoyl-[ACP] + CO2 + CoA. Its pathway is lipid metabolism; fatty acid biosynthesis. Functionally, catalyzes the condensation reaction of fatty acid synthesis by the addition to an acyl acceptor of two carbons from malonyl-ACP. Catalyzes the first condensation reaction which initiates fatty acid synthesis and may therefore play a role in governing the total rate of fatty acid production. Possesses both acetoacetyl-ACP synthase and acetyl transacylase activities. Its substrate specificity determines the biosynthesis of branched-chain and/or straight-chain of fatty acids. The chain is Beta-ketoacyl-[acyl-carrier-protein] synthase III from Ruegeria sp. (strain TM1040) (Silicibacter sp.).